We begin with the raw amino-acid sequence, 562 residues long: ATP synthase subunit beta, mitochondrial (562 aa).

Low complexity-rich tracts occupy residues 1–13 (MASRRLLSSLLRS) and 20–40 (SKSPISNINPKLSSSSPSSKS). 2 disordered regions span residues 1–43 (MASR…SRAS) and 58–83 (SAAAAAPPQPPPAKPEGGKGGGKITD). The transit peptide at 1-55 (MASRRLLSSLLRSSSRRSVSKSPISNINPKLSSSSPSSKSRASPYGYLLTRAAEY) directs the protein to the mitochondrion. 237–244 (GGAGVGKT) is a binding site for ATP.

This sequence belongs to the ATPase alpha/beta chains family. As to quaternary structure, F-type ATPases have 2 components, CF(1) - the catalytic core - and CF(0) - the membrane proton channel. CF(1) has five subunits: alpha(3), beta(3), gamma(1), delta(1), epsilon(1). CF(0) has three main subunits: a, b and c.

It is found in the mitochondrion. The protein resides in the mitochondrion inner membrane. It catalyses the reaction ATP + H2O + 4 H(+)(in) = ADP + phosphate + 5 H(+)(out). Functionally, mitochondrial membrane ATP synthase (F(1)F(0) ATP synthase or Complex V) produces ATP from ADP in the presence of a proton gradient across the membrane which is generated by electron transport complexes of the respiratory chain. F-type ATPases consist of two structural domains, F(1) - containing the extramembraneous catalytic core, and F(0) - containing the membrane proton channel, linked together by a central stalk and a peripheral stalk. During catalysis, ATP synthesis in the catalytic domain of F(1) is coupled via a rotary mechanism of the central stalk subunits to proton translocation. Subunits alpha and beta form the catalytic core in F(1). Rotation of the central stalk against the surrounding alpha(3)beta(3) subunits leads to hydrolysis of ATP in three separate catalytic sites on the beta subunits. This is ATP synthase subunit beta, mitochondrial (ATPB) from Hevea brasiliensis (Para rubber tree).